Reading from the N-terminus, the 101-residue chain is Large ribosomal subunit protein P1 (101 aa).

Over residues 61–72 (AAPAAAAAPAAA) the composition is skewed to low complexity. Residues 61-101 (AAPAAAAAPAAAEEAEEEAEEEEEEEEAEEEAAAGLGALFG) form a disordered region. Over residues 73–92 (EEAEEEAEEEEEEEEAEEEA) the composition is skewed to acidic residues.

It belongs to the eukaryotic ribosomal protein P1/P2 family. In terms of assembly, part of the 50S ribosomal subunit. Homodimer, it forms part of the ribosomal stalk which helps the ribosome interact with GTP-bound translation factors. Forms a heptameric uL10/P0(P1)2(P1)2(P1)2 complex, where uL10/P0 forms an elongated spine to which the P1 dimers bind in a sequential fashion.

Functionally, forms part of the ribosomal stalk, playing a central role in the interaction of the ribosome with GTP-bound translation factors. This chain is Large ribosomal subunit protein P1, found in Methanothermobacter thermautotrophicus (strain ATCC 29096 / DSM 1053 / JCM 10044 / NBRC 100330 / Delta H) (Methanobacterium thermoautotrophicum).